A 72-amino-acid polypeptide reads, in one-letter code: Small ribosomal subunit protein bS18c (72 aa).

The protein belongs to the bacterial ribosomal protein bS18 family. In terms of assembly, part of the 30S ribosomal subunit.

The protein resides in the plastid. It is found in the chloroplast. This Phaeodactylum tricornutum (strain CCAP 1055/1) protein is Small ribosomal subunit protein bS18c.